Reading from the N-terminus, the 704-residue chain is Inhibitor of carbonic anhydrase (704 aa).

A signal peptide spans 1–19 (MRLAFCVLLCAGSLGLCLA). 2 Transferrin-like domains span residues 25–347 (VRWC…HLRR) and 357–689 (VMWC…NVRQ). 16 disulfide bridges follow: C28-C67, C38-C58, C137-C213, C172-C188, C175-C196, C185-C198, C246-C260, C360-C392, C370-C383, C417-C699, C440-C662, C472-C549, C496-C690, C506-C520, C517-C532, and C589-C603. Residue N491 is glycosylated (N-linked (GlcNAc...) asparagine).

Belongs to the transferrin family. Monomer. Interacts (via transferrin-like domain 2) with CA2. N-glycosylated. In terms of tissue distribution, blood plasma (at protein level).

It localises to the secreted. Functionally, inhibitor for carbonic anhydrase 2 (CA2). Does not bind iron ions. This is Inhibitor of carbonic anhydrase from Sus scrofa (Pig).